A 35-amino-acid polypeptide reads, in one-letter code: Anti-H(O) lectin 3 (35 aa).

This sequence belongs to the leguminous lectin family. In terms of assembly, homodimer. In terms of processing, highly glycosylated.

In terms of biological role, binds lactose or galactose. In Ulex europaeus (Furze), this protein is Anti-H(O) lectin 3.